The primary structure comprises 285 residues: Ribosomal RNA small subunit methyltransferase A (285 aa).

Asparagine 29, leucine 31, glycine 56, glutamate 77, aspartate 102, and asparagine 123 together coordinate S-adenosyl-L-methionine.

This sequence belongs to the class I-like SAM-binding methyltransferase superfamily. rRNA adenine N(6)-methyltransferase family. RsmA subfamily.

Its subcellular location is the cytoplasm. It carries out the reaction adenosine(1518)/adenosine(1519) in 16S rRNA + 4 S-adenosyl-L-methionine = N(6)-dimethyladenosine(1518)/N(6)-dimethyladenosine(1519) in 16S rRNA + 4 S-adenosyl-L-homocysteine + 4 H(+). Its function is as follows. Specifically dimethylates two adjacent adenosines (A1518 and A1519) in the loop of a conserved hairpin near the 3'-end of 16S rRNA in the 30S particle. May play a critical role in biogenesis of 30S subunits. The sequence is that of Ribosomal RNA small subunit methyltransferase A from Clostridium perfringens (strain ATCC 13124 / DSM 756 / JCM 1290 / NCIMB 6125 / NCTC 8237 / Type A).